The chain runs to 415 residues: Branched-chain-amino-acid aminotransferase 5, chloroplastic (415 aa).

The N-terminal 65 residues, 1–65 (MERSAVASGF…IVSEVSRNRR (65 aa)), are a transit peptide targeting the chloroplast. K261 is modified (N6-(pyridoxal phosphate)lysine).

The protein belongs to the class-IV pyridoxal-phosphate-dependent aminotransferase family. It depends on pyridoxal 5'-phosphate as a cofactor.

It is found in the plastid. The protein resides in the chloroplast. The catalysed reaction is L-leucine + 2-oxoglutarate = 4-methyl-2-oxopentanoate + L-glutamate. It carries out the reaction L-isoleucine + 2-oxoglutarate = (S)-3-methyl-2-oxopentanoate + L-glutamate. It catalyses the reaction L-valine + 2-oxoglutarate = 3-methyl-2-oxobutanoate + L-glutamate. It functions in the pathway amino-acid biosynthesis; L-isoleucine biosynthesis; L-isoleucine from 2-oxobutanoate: step 4/4. It participates in amino-acid biosynthesis; L-leucine biosynthesis; L-leucine from 3-methyl-2-oxobutanoate: step 4/4. Its pathway is amino-acid biosynthesis; L-valine biosynthesis; L-valine from pyruvate: step 4/4. Its function is as follows. Converts 2-oxo acids to branched-chain amino acids. Acts on leucine, isoleucine and valine. The chain is Branched-chain-amino-acid aminotransferase 5, chloroplastic (BCAT5) from Arabidopsis thaliana (Mouse-ear cress).